The primary structure comprises 352 residues: uncharacterized protein (352 aa).

The N-terminal stretch at 1–22 is a signal peptide; it reads MIFKKTILIFIISFFFISISFA. Over residues 25–47 the composition is skewed to low complexity; sequence SSSSSSSSSSSSSSWSSSESSSS. The interval 25 to 49 is disordered; the sequence is SSSSSSSSSSSSSSWSSSESSSSPA. N-linked (GlcNAc...) asparagine glycosylation is found at Asn76, Asn110, Asn182, Asn212, and Asn223.

It localises to the secreted. This is an uncharacterized protein from Dictyostelium discoideum (Social amoeba).